Here is a 309-residue protein sequence, read N- to C-terminus: Olfactory receptor 2G3 (309 aa).

At 1–25 (MGLGNESSLMDFILLGFSDHPRLEA) the chain is on the extracellular side. An N-linked (GlcNAc...) asparagine glycan is attached at N5. A helical transmembrane segment spans residues 26-49 (VLFVFVLFFYLLTLVGNFTIIIIS). The Cytoplasmic portion of the chain corresponds to 50–57 (YLDPPLHT). A helical membrane pass occupies residues 58–79 (PMYFFLSNLSLLDICFTTSLAP). At 80–100 (QTLVNLQRPKKTITYGGCVAQ) the chain is on the extracellular side. C97 and C189 are disulfide-bonded. A helical membrane pass occupies residues 101 to 120 (LYISLALGSTECILLADMAL). At 121–139 (DRYIAVCKPLHYVVIMNPR) the chain is on the cytoplasmic side. A helical transmembrane segment spans residues 140-158 (LCQQLASISWLSGLASSLI). Residues 159–195 (HATFTLQLPLCGNHRLDHFICEVPALLKLACVDTTVN) lie on the Extracellular side of the membrane. Residues 196–219 (ELVLFVVSVLFVVIPPALISISYG) form a helical membrane-spanning segment. At 220–236 (FITQAVLRIKSVEARHK) the chain is on the cytoplasmic side. The chain crosses the membrane as a helical span at residues 237-259 (AFSTCSSHLTVVIIFYGTIIYVY). The Extracellular segment spans residues 260–272 (LQPSDSYAQDQGK). A helical transmembrane segment spans residues 273 to 292 (FISLFYTMVTPTLNPIIYTL). Residues 293 to 309 (RNKDMKEALRKLLSGKL) lie on the Cytoplasmic side of the membrane.

This sequence belongs to the G-protein coupled receptor 1 family.

It localises to the cell membrane. Functionally, odorant receptor. The polypeptide is Olfactory receptor 2G3 (OR2G3) (Homo sapiens (Human)).